The chain runs to 131 residues: Putative gamma-taxilin 2 (131 aa).

The protein belongs to the taxilin family.

In Pan troglodytes (Chimpanzee), this protein is Putative gamma-taxilin 2 (TXLNGY).